A 133-amino-acid polypeptide reads, in one-letter code: Small ribosomal subunit protein bS6 (133 aa).

The span at arginine 106 to proline 125 shows a compositional bias: basic and acidic residues. The tract at residues arginine 106–alanine 133 is disordered.

Belongs to the bacterial ribosomal protein bS6 family.

Its function is as follows. Binds together with bS18 to 16S ribosomal RNA. The sequence is that of Small ribosomal subunit protein bS6 from Psychromonas ingrahamii (strain DSM 17664 / CCUG 51855 / 37).